We begin with the raw amino-acid sequence, 86 residues long: MAEKFNLQDRFLNILRTSKIPVKVYLVNGFQTKGIIRSFDNFTMLLENGNQQNLIYKHAVSTIMPESFVRLTSKQQQEGKDSDEEE.

The Sm domain maps to 9-69 (DRFLNILRTS…VSTIMPESFV (61 aa)).

It belongs to the Hfq family. In terms of assembly, homohexamer.

In terms of biological role, RNA chaperone that binds small regulatory RNA (sRNAs) and mRNAs to facilitate mRNA translational regulation in response to envelope stress, environmental stress and changes in metabolite concentrations. Also binds with high specificity to tRNAs. The polypeptide is RNA-binding protein Hfq (Thermosipho melanesiensis (strain DSM 12029 / CIP 104789 / BI429)).